We begin with the raw amino-acid sequence, 203 residues long: ATP-dependent Clp protease proteolytic subunit 2 (203 aa).

Ser-100 functions as the Nucleophile in the catalytic mechanism. Residue His-125 is part of the active site.

The protein belongs to the peptidase S14 family. In terms of assembly, fourteen ClpP subunits assemble into 2 heptameric rings which stack back to back to give a disk-like structure with a central cavity, resembling the structure of eukaryotic proteasomes.

The protein resides in the cytoplasm. It catalyses the reaction Hydrolysis of proteins to small peptides in the presence of ATP and magnesium. alpha-casein is the usual test substrate. In the absence of ATP, only oligopeptides shorter than five residues are hydrolyzed (such as succinyl-Leu-Tyr-|-NHMec, and Leu-Tyr-Leu-|-Tyr-Trp, in which cleavage of the -Tyr-|-Leu- and -Tyr-|-Trp bonds also occurs).. Cleaves peptides in various proteins in a process that requires ATP hydrolysis. Has a chymotrypsin-like activity. Plays a major role in the degradation of misfolded proteins. The protein is ATP-dependent Clp protease proteolytic subunit 2 of Nocardia farcinica (strain IFM 10152).